The primary structure comprises 286 residues: Bifunctional protein FolD (286 aa).

NADP(+)-binding positions include 165 to 167 (GRS), S190, and V231.

It belongs to the tetrahydrofolate dehydrogenase/cyclohydrolase family. As to quaternary structure, homodimer.

The enzyme catalyses (6R)-5,10-methylene-5,6,7,8-tetrahydrofolate + NADP(+) = (6R)-5,10-methenyltetrahydrofolate + NADPH. It carries out the reaction (6R)-5,10-methenyltetrahydrofolate + H2O = (6R)-10-formyltetrahydrofolate + H(+). The protein operates within one-carbon metabolism; tetrahydrofolate interconversion. Functionally, catalyzes the oxidation of 5,10-methylenetetrahydrofolate to 5,10-methenyltetrahydrofolate and then the hydrolysis of 5,10-methenyltetrahydrofolate to 10-formyltetrahydrofolate. In Bacillus cereus (strain ZK / E33L), this protein is Bifunctional protein FolD.